We begin with the raw amino-acid sequence, 197 residues long: Anthranilate synthase component 2 (197 aa).

A Glutamine amidotransferase type-1 domain is found at 5 to 197 (KVLVIDNIDS…LIKNFVESEY (193 aa)). Position 55-57 (55-57 (GPK)) interacts with L-glutamine. The Nucleophile; for GATase activity role is filled by Cys80. Residues Gln84 and 130 to 131 (SL) each bind L-glutamine. Catalysis depends on for GATase activity residues His168 and Glu170.

Heterotetramer consisting of two non-identical subunits: a beta subunit (TrpG) and a large alpha subunit (TrpE).

The catalysed reaction is chorismate + L-glutamine = anthranilate + pyruvate + L-glutamate + H(+). Its pathway is amino-acid biosynthesis; L-tryptophan biosynthesis; L-tryptophan from chorismate: step 1/5. In terms of biological role, part of a heterotetrameric complex that catalyzes the two-step biosynthesis of anthranilate, an intermediate in the biosynthesis of L-tryptophan. In the first step, the glutamine-binding beta subunit (TrpG) of anthranilate synthase (AS) provides the glutamine amidotransferase activity which generates ammonia as a substrate that, along with chorismate, is used in the second step, catalyzed by the large alpha subunit of AS (TrpE) to produce anthranilate. In the absence of TrpG, TrpE can synthesize anthranilate directly from chorismate and high concentrations of ammonia. The polypeptide is Anthranilate synthase component 2 (trpG) (Methanocaldococcus jannaschii (strain ATCC 43067 / DSM 2661 / JAL-1 / JCM 10045 / NBRC 100440) (Methanococcus jannaschii)).